We begin with the raw amino-acid sequence, 60 residues long: Ferredoxin (60 aa).

4Fe-4S ferredoxin-type domains lie at 2 to 30 (VTID…EIQG) and 31 to 60 (DKVV…TVKE). Residues cysteine 9, cysteine 14, cysteine 17, cysteine 21, cysteine 41, cysteine 44, cysteine 47, and cysteine 51 each coordinate [4Fe-4S] cluster.

[4Fe-4S] cluster is required as a cofactor.

Ferredoxins are iron-sulfur proteins that transfer electrons probably in the CO-dehydrogenase complex. The sequence is that of Ferredoxin from Methanothermococcus thermolithotrophicus (Methanococcus thermolithotrophicus).